Reading from the N-terminus, the 108-residue chain is Trp operon repressor homolog (108 aa).

A DNA-binding region spans residues 59 to 82 (QRQISQLLGVGVATITRGSNELKS).

Belongs to the TrpR family. As to quaternary structure, homodimer.

It is found in the cytoplasm. Functionally, this protein is an aporepressor. When complexed with L-tryptophan it binds the operator region of the trp operon and prevents the initiation of transcription. The polypeptide is Trp operon repressor homolog (Aliivibrio salmonicida (strain LFI1238) (Vibrio salmonicida (strain LFI1238))).